The sequence spans 232 residues: Probable metallo-hydrolase M6_Spy0554 (232 aa).

Zn(2+) contacts are provided by His-75, His-77, Asp-79, His-80, His-155, Asp-174, and His-215.

The cofactor is Zn(2+).

This is Probable metallo-hydrolase M6_Spy0554 from Streptococcus pyogenes serotype M6 (strain ATCC BAA-946 / MGAS10394).